A 276-amino-acid polypeptide reads, in one-letter code: MATSSSAFDDEFPMEEGMPELLDDEDVPSTLPSLLEQNMDTALKSNEFKLVKRKRRAGNAVDVVMEDISQPDDSTTDSPDADAEQKPTKRSKGSKGESRVVPVPKHRYTPLKDNWVNIFTPIVKNLGLQIRFNLKKRQVELRNPADREDTTDLQKATDFVRAFILGFEVNDAIALIRLDHLFLETFEIADVKHSLKGDHVSRAIGRIAGKDGRTKLVIENTTKTRIVVANTKIHILGAYQNLKLARNAVCSLILGSNPSKVYGNLRNMASRGAERL.

2 disordered regions span residues 1–30 and 62–101; these read MATS…VPST and DVVM…SRVV. A compositionally biased stretch (acidic residues) spans 8 to 27; the sequence is FDDEFPMEEGMPELLDDEDV. Positions 197-249 constitute a KH domain; that stretch reads GDHVSRAIGRIAGKDGRTKLVIENTTKTRIVVANTKIHILGAYQNLKLARNAV.

Belongs to the PNO1 family. Part of the small subunit (SSU) processome, composed of more than 70 proteins and the RNA chaperone small nucleolar RNA (snoRNA) U3.

The protein resides in the nucleus. The protein localises to the nucleolus. Part of the small subunit (SSU) processome, first precursor of the small eukaryotic ribosomal subunit. During the assembly of the SSU processome in the nucleolus, many ribosome biogenesis factors, an RNA chaperone and ribosomal proteins associate with the nascent pre-rRNA and work in concert to generate RNA folding, modifications, rearrangements and cleavage as well as targeted degradation of pre-ribosomal RNA by the RNA exosome. Positively regulates dimethylation of two adjacent adenosines in the loop of a conserved hairpin near the 3'-end of 18S rRNA. This Caenorhabditis briggsae protein is RNA-binding protein pno-1.